Reading from the N-terminus, the 387-residue chain is Gamma-butyrobetaine dioxygenase (387 aa).

Positions 38, 40, 43, and 82 each coordinate Zn(2+). Fe cation-binding residues include His202, Asp204, and His347. The residue at position 351 (Ser351) is a Phosphoserine.

Belongs to the gamma-BBH/TMLD family. Fe(2+) serves as cofactor. L-ascorbate is required as a cofactor.

It localises to the cytoplasm. It carries out the reaction 4-(trimethylamino)butanoate + 2-oxoglutarate + O2 = carnitine + succinate + CO2. It functions in the pathway amine and polyamine biosynthesis; carnitine biosynthesis. Its function is as follows. Catalyzes the formation of L-carnitine from gamma-butyrobetaine. The protein is Gamma-butyrobetaine dioxygenase (Bbox1) of Mus musculus (Mouse).